Reading from the N-terminus, the 175-residue chain is Mitochondrial inner membrane protease subunit 2 (175 aa).

Residues 19–37 (FFVAVPVAVTFLDRVACVA) traverse the membrane as a helical segment. Catalysis depends on residues Ser-43 and Lys-91.

Belongs to the peptidase S26 family. IMP2 subfamily. Heterodimer of 2 subunits, IMMPL1 and IMMPL2. Expressed in all tissues tested except adult liver and lung.

Its subcellular location is the mitochondrion inner membrane. Functionally, catalyzes the removal of transit peptides required for the targeting of proteins from the mitochondrial matrix, across the inner membrane, into the inter-membrane space. Known to process the nuclear encoded protein DIABLO. This chain is Mitochondrial inner membrane protease subunit 2 (IMMP2L), found in Homo sapiens (Human).